Here is a 413-residue protein sequence, read N- to C-terminus: Short-chain specific acyl-CoA dehydrogenase, mitochondrial (413 aa).

Residues 1-24 (MAAALLARACGPVRGALWPRDCRR) constitute a mitochondrion transit peptide. Residue Thr27 is modified to Phosphothreonine. Lys51 carries the post-translational modification N6-acetyllysine; alternate. Position 51 is an N6-succinyllysine; alternate (Lys51). Lys72 is subject to N6-acetyllysine. The residue at position 129 (Lys129) is an N6-acetyllysine; alternate. Residue Lys129 is modified to N6-succinyllysine; alternate. FAD contacts are provided by residues 152–161 (FALSEPGNGS) and 185–187 (WIT). Residue Ser161 participates in substrate binding. An N6-acetyllysine modification is found at Lys208. Lys262 carries the N6-acetyllysine; alternate modification. Lys262 carries the post-translational modification N6-succinyllysine; alternate. 269 to 272 (DMGR) serves as a coordination point for substrate. Arg297 contacts FAD. Lys306 is modified (N6-acetyllysine; alternate). Position 306 is an N6-succinyllysine; alternate (Lys306). FAD-binding positions include Gln308 and 366–370 (QILGG). The active-site Proton acceptor is the Glu393. Gly394 contributes to the substrate binding site. 395–397 (TSE) contributes to the FAD binding site.

The protein belongs to the acyl-CoA dehydrogenase family. As to quaternary structure, homotetramer. It depends on FAD as a cofactor.

The protein resides in the mitochondrion matrix. The enzyme catalyses a short-chain 2,3-saturated fatty acyl-CoA + oxidized [electron-transfer flavoprotein] + H(+) = a short-chain (2E)-enoyl-CoA + reduced [electron-transfer flavoprotein]. It carries out the reaction butanoyl-CoA + oxidized [electron-transfer flavoprotein] + H(+) = (2E)-butenoyl-CoA + reduced [electron-transfer flavoprotein]. The catalysed reaction is pentanoyl-CoA + oxidized [electron-transfer flavoprotein] + H(+) = (2E)-pentenoyl-CoA + reduced [electron-transfer flavoprotein]. It catalyses the reaction hexanoyl-CoA + oxidized [electron-transfer flavoprotein] + H(+) = (2E)-hexenoyl-CoA + reduced [electron-transfer flavoprotein]. The protein operates within lipid metabolism; mitochondrial fatty acid beta-oxidation. Its function is as follows. Short-chain specific acyl-CoA dehydrogenase is one of the acyl-CoA dehydrogenases that catalyze the first step of mitochondrial fatty acid beta-oxidation, an aerobic process breaking down fatty acids into acetyl-CoA and allowing the production of energy from fats. The first step of fatty acid beta-oxidation consists in the removal of one hydrogen from C-2 and C-3 of the straight-chain fatty acyl-CoA thioester, resulting in the formation of trans-2-enoyl-CoA. Among the different mitochondrial acyl-CoA dehydrogenases, short-chain specific acyl-CoA dehydrogenase acts specifically on acyl-CoAs with saturated 4 to 6 carbons long primary chains. This Sus scrofa (Pig) protein is Short-chain specific acyl-CoA dehydrogenase, mitochondrial (ACADS).